A 725-amino-acid polypeptide reads, in one-letter code: MDAPVPAAPAFGGSWAKLNPPLSPWILDVINSMGFKNMTPVQAGTIPRAVKNQDCVVEAVTGSGKTLAFTIPVLERLSRREEPYKKGEIAAIVVAPTRELATQIHAVFHHFLSSLIPPESEEETGDVEAHAPPFASSSRSPSPQTPDKPLFPLPMLVTSGTPTPYETFQSTHPSILIGTPGRLAAFLLNPRGLAIVRVSELDVLVLDEADRLLSSPDHRRDVERIMRHLPKQRRTHLFSATMTDAVEEMIGLGLRNPVRIVVNLKDKRKDGEEPKERRTPMALQNTYLVCRHAEKTLQLIRLLLCESTKHERSKFIVYFSTCAAVDYFYRILSRLPSLSKFHLTSFHGELPPKIRETALSTFTSHPSSHLSPAVLLCTDVAARGVDFLDIDVVIQYDAPTDPKTFSHRAGRTARAGRRGKAVVLLGKGREEDYVDFLNIRKIPLTKQPYINAYLEEVDTPQALDPEATTLLHSIRQIILTDRELSDKAAKSFVSAFRAYSKHEASFIFRTLDFDFNSQAISFGLLRLPAMPEIKDWKKKKEAERQRLEKIKSEGGEVEEKEIIEWEDAGVNWDTFAYASRQREAARLATLAQRADNQSSNDAARAEARAKRKIKAEMREAWSEQKERKVRKEERKEKKDAKKKYEWELEQANGEGDRQSDLANIAKAQAERKKRREREEESWDEEIGKEYKSLKREIKEEKSVKESSKGGAGGGGIGGGMFDDLE.

A Q motif motif is present at residues 15–43 (WAKLNPPLSPWILDVINSMGFKNMTPVQA). A Helicase ATP-binding domain is found at 46-260 (IPRAVKNQDC…GLGLRNPVRI (215 aa)). Position 59–66 (59–66 (AVTGSGKT)) interacts with ATP. Residues 119–156 (ESEEETGDVEAHAPPFASSSRSPSPQTPDKPLFPLPML) are disordered. The segment covering 132–142 (PPFASSSRSPS) has biased composition (low complexity). The segment covering 143 to 152 (PQTPDKPLFP) has biased composition (pro residues). Residues 207 to 210 (DEAD) carry the DEAD box motif. Positions 295–458 (KTLQLIRLLL…YINAYLEEVD (164 aa)) constitute a Helicase C-terminal domain. Residues 591–725 (AQRADNQSSN…IGGGMFDDLE (135 aa)) form a disordered region. Composition is skewed to basic and acidic residues over residues 603–646 (ARAE…KYEW) and 685–707 (EIGK…KESS). Residues 709–725 (GGAGGGGIGGGMFDDLE) show a composition bias toward gly residues.

This sequence belongs to the DEAD box helicase family. DDX55/SPB4 subfamily. Component of pre-60S ribosomal complexes.

The protein localises to the nucleus. It localises to the nucleolus. The enzyme catalyses ATP + H2O = ADP + phosphate + H(+). In terms of biological role, ATP-binding RNA helicase involved in the biogenesis of 60S ribosomal subunits. Binds 90S pre-ribosomal particles and dissociates from pre-60S ribosomal particles after processing of 27SB pre-rRNA. Required for the normal formation of 18S rRNA through the processing of pre-rRNAs at sites A0, A1 and A2, and the normal formation of 25S and 5.8S rRNAs through the processing of pre-rRNAs at sites C1 and C2. The polypeptide is ATP-dependent rRNA helicase SPB4 (Cryptococcus neoformans var. neoformans serotype D (strain JEC21 / ATCC MYA-565) (Filobasidiella neoformans)).